The chain runs to 871 residues: Alanine--tRNA ligase (871 aa).

4 residues coordinate Zn(2+): H561, H565, C665, and H669.

It belongs to the class-II aminoacyl-tRNA synthetase family. It depends on Zn(2+) as a cofactor.

Its subcellular location is the cytoplasm. The catalysed reaction is tRNA(Ala) + L-alanine + ATP = L-alanyl-tRNA(Ala) + AMP + diphosphate. Functionally, catalyzes the attachment of alanine to tRNA(Ala) in a two-step reaction: alanine is first activated by ATP to form Ala-AMP and then transferred to the acceptor end of tRNA(Ala). Also edits incorrectly charged Ser-tRNA(Ala) and Gly-tRNA(Ala) via its editing domain. The protein is Alanine--tRNA ligase of Dehalococcoides mccartyi (strain CBDB1).